Here is a 124-residue protein sequence, read N- to C-terminus: Membrane-anchored ubiquitin-fold protein 2 (124 aa).

The Ubiquitin-like domain maps to 8-74 (LEIKFRLNDG…LENNKTVGDC (67 aa)). S-palmitoyl cysteine attachment occurs at residues Cys-115, Cys-117, Cys-119, and Cys-124.

In terms of processing, acylated protein. Probably modified with palmitate. As to expression, ubiquitous, but three fold higher expression in stamens.

Its subcellular location is the cell membrane. In terms of biological role, may serve as docking site to facilitate the association of other proteins to the plasma membrane. This Arabidopsis thaliana (Mouse-ear cress) protein is Membrane-anchored ubiquitin-fold protein 2 (MUB2).